The following is a 373-amino-acid chain: ORC1-type DNA replication protein 2 (373 aa).

ATP is bound by residues 63–67 (TGKTS), Tyr-205, and Arg-217.

This sequence belongs to the CDC6/cdc18 family.

In terms of biological role, involved in regulation of DNA replication. In Methanosarcina acetivorans (strain ATCC 35395 / DSM 2834 / JCM 12185 / C2A), this protein is ORC1-type DNA replication protein 2 (cdc6-2).